The sequence spans 183 residues: uncharacterized protein (183 aa).

The tract at residues 1 to 36 (MAKRGNKKKQEAPLSLGKHTVGGRVGKPTNAKTGSA) is disordered. The 75-residue stretch at 100-174 (TNVVIENLAP…FKLSCYIKKN (75 aa)) folds into the RRM domain.

The protein resides in the nucleus. It is found in the nucleolus. This is an uncharacterized protein from Schizosaccharomyces pombe (strain 972 / ATCC 24843) (Fission yeast).